Consider the following 155-residue polypeptide: MSESKSGPEYASFFAVMGASAAMVFSALGAAYGTAKSGTGIAAMSVMRPEQIMKSIIPVVMAGIIAIYGLVVAVLIANSLNDDISLYKSFLQLGAGLSVGLSGLAAGFAIGIVGDAGVRGTAQQPRLFVGMILILIFAEVLGLYGLIVALILSTK.

The Lumenal portion of the chain corresponds to 1 to 10 (MSESKSGPEY). Residues 11–33 (ASFFAVMGASAAMVFSALGAAYG) traverse the membrane as a helical segment. The Cytoplasmic portion of the chain corresponds to 34-55 (TAKSGTGIAAMSVMRPEQIMKS). A helical membrane pass occupies residues 56–76 (IIPVVMAGIIAIYGLVVAVLI). Topologically, residues 77–92 (ANSLNDDISLYKSFLQ) are lumenal. Residues 93–114 (LGAGLSVGLSGLAAGFAIGIVG) form a helical membrane-spanning segment. The Cytoplasmic segment spans residues 115–131 (DAGVRGTAQQPRLFVGM). A helical membrane pass occupies residues 132–152 (ILILIFAEVLGLYGLIVALIL). Over 153–155 (STK) the chain is Lumenal.

It belongs to the V-ATPase proteolipid subunit family. In terms of assembly, V-ATPase is a heteromultimeric enzyme made up of two complexes: the ATP-hydrolytic V1 complex and the proton translocation V0 complex. The V1 complex consists of three catalytic AB heterodimers that form a heterohexamer, three peripheral stalks each consisting of EG heterodimers, one central rotor including subunits D and F, and the regulatory subunits C and H. The proton translocation complex V0 consists of the proton transport subunit a, a ring of proteolipid subunits c9c'', rotary subunit d, subunits e and f, and the accessory subunits ATP6AP1/Ac45 and ATP6AP2/PRR. Interacts with the V0 complex V-ATPase subunit a4 ATP6V0A4. Interacts with LASS2. Interacts with RNF182; this interaction leads to ubiquitination and degradation via the proteasome pathway. As to quaternary structure, (Microbial infection) Interacts with HTLV-1 accessory protein p12I. Post-translationally, ubiquitinated by RNF182, leading to its degradation via the ubiquitin-proteasome pathway.

Its subcellular location is the cytoplasmic vesicle. It localises to the clathrin-coated vesicle membrane. The protein localises to the secretory vesicle. It is found in the synaptic vesicle membrane. Proton-conducting pore forming subunit of the V0 complex of vacuolar(H+)-ATPase (V-ATPase), a multisubunit enzyme composed of a peripheral complex (V1) that hydrolyzes ATP and a membrane integral complex (V0) that translocates protons. V-ATPase is responsible for acidifying and maintaining the pH of intracellular compartments, and in some cell types, it is targeted to the plasma membrane, where it is responsible for acidifying the extracellular environment. In Homo sapiens (Human), this protein is V-type proton ATPase 16 kDa proteolipid subunit c (ATP6V0C).